A 632-amino-acid polypeptide reads, in one-letter code: Basic helix-loop-helix ARNT-like protein 1 (632 aa).

The disordered stretch occupies residues 1–39 (MADQRMDISSTISDFMSPGPTDLLSGSLGTSGVDCNRKR). Ser-17 carries the post-translational modification Phosphoserine; by GSK3-beta. Residue Thr-21 is modified to Phosphothreonine; by GSK3-beta. The short motif at 36–41 (NRKRKG) is the Nuclear localization signal element. Positions 79-132 (NAREAHSQIEKRRRDKMNSFIDELASLVPTCNAMSRKLDKLTVLRMAVQHMKTL) constitute a bHLH domain. The residue at position 85 (Ser-85) is a Phosphoserine. Residue Ser-97 is modified to Phosphoserine; by CK2. The Nuclear export signal 1 motif lies at 149–159 (LSDDELKHLIL). Residues 150–222 (SDDELKHLIL…EQLSSSDTAP (73 aa)) enclose the PAS 1 domain. Lys-259 is covalently cross-linked (Glycyl lysine isopeptide (Lys-Gly) (interchain with G-Cter in SUMO2 and SUMO3)). Lys-266 is covalently cross-linked (Glycyl lysine isopeptide (Lys-Gly) (interchain with G-Cter in SUMO); alternate). Residue Lys-266 forms a Glycyl lysine isopeptide (Lys-Gly) (interchain with G-Cter in SUMO2); alternate linkage. Residues 333-403 (QPANGEIRVK…CHRQVLQTRE (71 aa)) form the PAS 2 domain. Residues 367–375 (LAYLPQELL) carry the Nuclear export signal 2 motif. One can recognise a PAC domain in the interval 408-451 (NCYKFKIKDGSFITLRSRWFSFMNPWTKEVEYIVSTNTVVLANV). 2 disordered regions span residues 465 to 498 (PPHS…RAGA) and 517 to 601 (GSSP…SPSN). The segment at 514-594 (RIRGSSPSSC…IGIDMIDNDQ (81 aa)) is interaction with CIART. The span at 517-527 (GSSPSSCGSSP) shows a compositional bias: low complexity. Position 544 is an N6-acetyllysine (Lys-544).

As to quaternary structure, component of the circadian clock oscillator which includes the CRY1/2 proteins, CLOCK or NPAS2, BMAL1 or BMAL2, CSNK1D and/or CSNK1E, TIMELESS and the PER1/2/3 proteins. Forms a heterodimer with CLOCK. The CLOCK-BMAL1 heterodimer is required for E-box-dependent transactivation, for CLOCK nuclear translocation and degradation, and, for phosphorylation of both CLOCK and BMAL1. Part of a nuclear complex which also includes RACK1 and PRKCA; RACK1 and PRKCA are recruited to the complex in a circadian manner. Interacts with NPAS2. Interacts with EZH2. Interacts with SUMO3. Interacts with SIRT1. Interacts with AHR. Interacts with ID1, ID2 and ID3. Interacts with DDX4. Interacts with OGT. Interacts with EED and SUZ12. Interacts with MTA1. Interacts with CIART. Interacts with HSP90. Interacts with KAT2B and EP300. Interacts with BHLHE40/DEC1 and BHLHE41/DEC2. Interacts with RELB and the interaction is enhanced in the presence of CLOCK. Interacts with PER1, PER2, CRY1 and CRY2 and this interaction requires a translocation to the nucleus. Interaction of the CLOCK-BMAL1 heterodimer with PER or CRY inhibits transcription activation. Interaction of the CLOCK-BMAL1 with CRY1 is independent of DNA but with PER2 is off DNA. The CLOCK-BMAL1 heterodimer interacts with GSK3B. Interacts with KDM5A. Interacts with KMT2A; in a circadian manner. Interacts with UBE3A. Interacts with PRKCG. Interacts with MAGEL2. Interacts with NCOA2. Interacts with THRAP3. The CLOCK-BMAL1 heterodimer interacts with PASD1. Interacts with PASD1. Interacts with USP9X. Interacts with PIWIL2 (via PIWI domain). Interacts with HDAC3. Interacts with HNF4A. Post-translationally, ubiquitinated, leading to its proteasomal degradation. Deubiquitinated by USP9X. O-glycosylated; contains O-GlcNAc. O-glycosylation by OGT prevents protein degradation by inhibiting ubiquitination. It also stabilizes the CLOCK-BMAL1 heterodimer thereby increasing CLOCK-BMAL1-mediated transcription of genes in the negative loop of the circadian clock such as PER1/2/3 and CRY1/2. In terms of processing, acetylated on Lys-544 by CLOCK during the repression phase of the circadian cycle. Acetylation facilitates recruitment of CRY1 protein and initiates the repression phase of the circadian cycle. Acetylated at Lys-544 by KAT5 during the activation phase of the cycle, leading to recruitment of the positive transcription elongation factor b (P-TEFb) and BRD4, followed by productive elongation of circadian transcripts. Deacetylated by SIRT1, which may result in decreased protein stability. Post-translationally, phosphorylated upon dimerization with CLOCK. Phosphorylation enhances the transcriptional activity, alters the subcellular localization and decreases the stability of the CLOCK-BMAL1 heterodimer by promoting its degradation. Phosphorylation shows circadian variations in the liver with a peak between CT10 to CT14. Phosphorylation at Ser-97 by CK2 is essential for its nuclear localization, its interaction with CLOCK and controls CLOCK nuclear entry. Dephosphorylation at Ser-85 is important for dimerization with CLOCK and transcriptional activity. Sumoylated on Lys-266 upon dimerization with CLOCK. Predominantly conjugated to poly-SUMO2/3 rather than SUMO1 and the level of these conjugates undergo rhythmic variation, peaking at CT9-CT12. Sumoylation localizes it exclusively to the PML body and promotes its ubiquitination in the PML body, ubiquitin-dependent proteasomal degradation and the transcriptional activity of the CLOCK-BMAL1 heterodimer. In terms of processing, undergoes lysosome-mediated degradation in a time-dependent manner in the liver. In terms of tissue distribution, expressed in liver and testis (at protein level). Expressed in the suprachiasmatic nucleus (SCN) in a circadian manner.

The protein localises to the nucleus. The protein resides in the cytoplasm. Its subcellular location is the PML body. With respect to regulation, the redox state of the cell can modulate the transcriptional activity of the CLOCK-BMAL1 and NPAS2-BMAL1 heterodimers; NADH and NADPH enhance the DNA-binding activity of the heterodimers. In terms of biological role, transcriptional activator which forms a core component of the circadian clock. The circadian clock, an internal time-keeping system, regulates various physiological processes through the generation of approximately 24 hour circadian rhythms in gene expression, which are translated into rhythms in metabolism and behavior. It is derived from the Latin roots 'circa' (about) and 'diem' (day) and acts as an important regulator of a wide array of physiological functions including metabolism, sleep, body temperature, blood pressure, endocrine, immune, cardiovascular, and renal function. Consists of two major components: the central clock, residing in the suprachiasmatic nucleus (SCN) of the brain, and the peripheral clocks that are present in nearly every tissue and organ system. Both the central and peripheral clocks can be reset by environmental cues, also known as Zeitgebers (German for 'timegivers'). The predominant Zeitgeber for the central clock is light, which is sensed by retina and signals directly to the SCN. The central clock entrains the peripheral clocks through neuronal and hormonal signals, body temperature and feeding-related cues, aligning all clocks with the external light/dark cycle. Circadian rhythms allow an organism to achieve temporal homeostasis with its environment at the molecular level by regulating gene expression to create a peak of protein expression once every 24 hours to control when a particular physiological process is most active with respect to the solar day. Transcription and translation of core clock components (CLOCK, NPAS2, BMAL1, BMAL2, PER1, PER2, PER3, CRY1 and CRY2) plays a critical role in rhythm generation, whereas delays imposed by post-translational modifications (PTMs) are important for determining the period (tau) of the rhythms (tau refers to the period of a rhythm and is the length, in time, of one complete cycle). A diurnal rhythm is synchronized with the day/night cycle, while the ultradian and infradian rhythms have a period shorter and longer than 24 hours, respectively. Disruptions in the circadian rhythms contribute to the pathology of cardiovascular diseases, cancer, metabolic syndromes and aging. A transcription/translation feedback loop (TTFL) forms the core of the molecular circadian clock mechanism. Transcription factors, CLOCK or NPAS2 and BMAL1 or BMAL2, form the positive limb of the feedback loop, act in the form of a heterodimer and activate the transcription of core clock genes and clock-controlled genes (involved in key metabolic processes), harboring E-box elements (5'-CACGTG-3') within their promoters. The core clock genes: PER1/2/3 and CRY1/2 which are transcriptional repressors form the negative limb of the feedback loop and interact with the CLOCK|NPAS2-BMAL1|BMAL2 heterodimer inhibiting its activity and thereby negatively regulating their own expression. This heterodimer also activates nuclear receptors NR1D1/2 and RORA/B/G, which form a second feedback loop and which activate and repress BMAL1 transcription, respectively. BMAL1 positively regulates myogenesis and negatively regulates adipogenesis via the transcriptional control of the genes of the canonical Wnt signaling pathway. Plays a role in normal pancreatic beta-cell function; regulates glucose-stimulated insulin secretion via the regulation of antioxidant genes NFE2L2/NRF2 and its targets SESN2, PRDX3, CCLC and CCLM. Negatively regulates the mTORC1 signaling pathway; regulates the expression of MTOR and DEPTOR. Controls diurnal oscillations of Ly6C inflammatory monocytes; rhythmic recruitment of the PRC2 complex imparts diurnal variation to chemokine expression that is necessary to sustain Ly6C monocyte rhythms. Regulates the expression of HSD3B2, STAR, PTGS2, CYP11A1, CYP19A1 and LHCGR in the ovary and also the genes involved in hair growth. Plays an important role in adult hippocampal neurogenesis by regulating the timely entry of neural stem/progenitor cells (NSPCs) into the cell cycle and the number of cell divisions that take place prior to cell-cycle exit. Regulates the circadian expression of CIART and KLF11. The CLOCK-BMAL1 heterodimer regulates the circadian expression of SERPINE1/PAI1, VWF, B3, CCRN4L/NOC, NAMPT, DBP, MYOD1, PPARGC1A, PPARGC1B, SIRT1, GYS2, F7, NGFR, GNRHR, BHLHE40/DEC1, ATF4, MTA1, KLF10 and also genes implicated in glucose and lipid metabolism. Promotes rhythmic chromatin opening, regulating the DNA accessibility of other transcription factors. May play a role in spermatogenesis; contributes to the chromatoid body assembly and physiology. The NPAS2-BMAL1 heterodimer positively regulates the expression of MAOA, F7 and LDHA and modulates the circadian rhythm of daytime contrast sensitivity by regulating the rhythmic expression of adenylate cyclase type 1 (ADCY1) in the retina. The preferred binding motif for the CLOCK-BMAL1 heterodimer is 5'-CACGTGA-3', which contains a flanking adenine nucleotide at the 3-prime end of the canonical 6-nucleotide E-box sequence. CLOCK specifically binds to the half-site 5'-CAC-3', while BMAL1 binds to the half-site 5'-GTGA-3'. The CLOCK-BMAL1 heterodimer also recognizes the non-canonical E-box motifs 5'-AACGTGA-3' and 5'-CATGTGA-3'. Essential for the rhythmic interaction of CLOCK with ASS1 and plays a critical role in positively regulating CLOCK-mediated acetylation of ASS1. Plays a role in protecting against lethal sepsis by limiting the expression of immune checkpoint protein CD274 in macrophages in a PKM2-dependent manner. Regulates the diurnal rhythms of skeletal muscle metabolism via transcriptional activation of genes promoting triglyceride synthesis (DGAT2) and metabolic efficiency (COQ10B). The polypeptide is Basic helix-loop-helix ARNT-like protein 1 (Bmal1) (Mus musculus (Mouse)).